A 408-amino-acid polypeptide reads, in one-letter code: S-adenosylmethionine synthase (408 aa).

142 to 147 (GEGSGD) contributes to the ATP binding site.

The protein belongs to the AdoMet synthase 2 family. The cofactor is Mg(2+).

The enzyme catalyses L-methionine + ATP + H2O = S-adenosyl-L-methionine + phosphate + diphosphate. The protein operates within amino-acid biosynthesis; S-adenosyl-L-methionine biosynthesis; S-adenosyl-L-methionine from L-methionine: step 1/1. Its function is as follows. Catalyzes the formation of S-adenosylmethionine from methionine and ATP. In Halobacterium salinarum (strain ATCC 29341 / DSM 671 / R1), this protein is S-adenosylmethionine synthase.